Consider the following 120-residue polypeptide: Large ribosomal subunit protein uL18 (120 aa).

It belongs to the universal ribosomal protein uL18 family. Part of the 50S ribosomal subunit; part of the 5S rRNA/L5/L18/L25 subcomplex. Contacts the 5S and 23S rRNAs.

Functionally, this is one of the proteins that bind and probably mediate the attachment of the 5S RNA into the large ribosomal subunit, where it forms part of the central protuberance. In Agrobacterium fabrum (strain C58 / ATCC 33970) (Agrobacterium tumefaciens (strain C58)), this protein is Large ribosomal subunit protein uL18.